The sequence spans 464 residues: 26S proteasome regulatory subunit 7 homolog B (464 aa).

ATP is bound at residue 246-253 (GPPGSGKT). Lys452 is covalently cross-linked (Glycyl lysine isopeptide (Lys-Gly) (interchain with G-Cter in ubiquitin)).

The protein belongs to the AAA ATPase family. Component of the 19S regulatory particle (RP/PA700) base subcomplex of the 26S proteasome. The 26S proteasome is composed of a core protease (CP), known as the 20S proteasome, capped at one or both ends by the 19S regulatory particle (RP/PA700). The RP/PA700 complex is composed of at least 17 different subunits in two subcomplexes, the base and the lid, which form the portions proximal and distal to the 20S proteolytic core, respectively.

It localises to the cytoplasm. The protein resides in the nucleus. In terms of biological role, the 26S proteasome is involved in the ATP-dependent degradation of ubiquitinated proteins. The regulatory (or ATPase) complex confers ATP dependency and substrate specificity to the 26S complex. The protein is 26S proteasome regulatory subunit 7 homolog B (RPT1B) of Arabidopsis thaliana (Mouse-ear cress).